Reading from the N-terminus, the 337-residue chain is MAQETAPPCGPVSRGDSPIIEKMEKRTCALCPEGHEWSQIYFSPSGNIVAHENCLLYSSGLVECETLDLRNTIRNFDVKSVKKEIWRGRRLKCSFCNKGGATVGCDLWFCKKSYHYVCAKKDQAILQVDGNHGTYKLFCPEHSPEQEEATESADDPSMKKKRGKNKRLSSGPPAQPKTMKCSNAKRHMTEEPHGHTDAAVKSPFLKKCQEAGLLTELFEHILENMDSVHGRLVDETASESDYEGIETLLFDCGLFKDTLRKFQEVIKSKACEWEERQRQMKQQLEALADLQQSLCSFQENGDLDCSSSTSGSLLPPEDHQVRSQESPEVQAGSGDSL.

The C2HC pre-PHD-type zinc-finger motif lies at 25–61 (KRTCALCPEGHEWSQIYFSPSGNIVAHENCLLYSSGL). The PHD-type zinc-finger motif lies at 91-143 (LKCSFCNKGGATVGCDLWFCKKSYHYVCAKKDQAILQVDGNHGTYKLFCPEHS). Disordered stretches follow at residues 145-196 (EQEE…HGHT) and 301-337 (GDLD…GDSL). Over residues 187 to 196 (HMTEEPHGHT) the composition is skewed to basic and acidic residues. Polar residues-rich tracts occupy residues 301–312 (GDLDCSSSTSGS) and 323–337 (SQES…GDSL).

As to quaternary structure, interacts with BRCA1 and RELA.

It localises to the nucleus. Its function is as follows. Positive regulator of Th1-type cytokine gene expression. The polypeptide is PHD finger protein 11 (Phf11) (Mus musculus (Mouse)).